We begin with the raw amino-acid sequence, 93 residues long: Cell division topological specificity factor (93 aa).

It belongs to the MinE family.

Its function is as follows. Prevents the cell division inhibition by proteins MinC and MinD at internal division sites while permitting inhibition at polar sites. This ensures cell division at the proper site by restricting the formation of a division septum at the midpoint of the long axis of the cell. The protein is Cell division topological specificity factor of Halorhodospira halophila (strain DSM 244 / SL1) (Ectothiorhodospira halophila (strain DSM 244 / SL1)).